The sequence spans 410 residues: Sulfate adenylyltransferase (410 aa).

Belongs to the sulfate adenylyltransferase family.

It catalyses the reaction sulfate + ATP + H(+) = adenosine 5'-phosphosulfate + diphosphate. The protein operates within sulfur metabolism; hydrogen sulfide biosynthesis; sulfite from sulfate: step 1/3. The polypeptide is Sulfate adenylyltransferase (Syntrophobacter fumaroxidans (strain DSM 10017 / MPOB)).